A 423-amino-acid chain; its full sequence is Elongation factor 1-alpha (423 aa).

Residues 5–221 (KEHINVAFIG…DLLKPPEKLV (217 aa)) form the tr-type G domain. The segment at 14-21 (GHVDHGKS) is G1. Residue 14 to 21 (GHVDHGKS) coordinates GTP. Ser-21 provides a ligand contact to Mg(2+). Residues 70-74 (GVTID) form a G2 region. The interval 91-94 (DCPG) is G3. GTP contacts are provided by residues 91-95 (DCPGH) and 146-149 (NKMD). The interval 146 to 149 (NKMD) is G4. The interval 185 to 187 (SAY) is G5.

The protein belongs to the TRAFAC class translation factor GTPase superfamily. Classic translation factor GTPase family. EF-Tu/EF-1A subfamily.

Its subcellular location is the cytoplasm. It catalyses the reaction GTP + H2O = GDP + phosphate + H(+). Its function is as follows. GTP hydrolase that promotes the GTP-dependent binding of aminoacyl-tRNA to the A-site of ribosomes during protein biosynthesis. The sequence is that of Elongation factor 1-alpha from Archaeoglobus fulgidus (strain ATCC 49558 / DSM 4304 / JCM 9628 / NBRC 100126 / VC-16).